Reading from the N-terminus, the 133-residue chain is Adenosine 5'-monophosphoramidase hnt1 (133 aa).

The 104-residue stretch at 4–107 folds into the HIT domain; the sequence is IFCKIVKGDI…IPKPNEEYGL (104 aa). AMP contacts are provided by residues 29 to 30, Asn-81, 87 to 89, and 94 to 96; these read DI, HQF, and HFH. Positions 92–96 match the Histidine triad motif motif; that stretch reads HVHFH. The active-site Tele-AMP-histidine intermediate is the His-94.

This sequence belongs to the HINT family. In terms of assembly, homodimer. It depends on Mg(2+) as a cofactor.

The protein localises to the nucleus. The catalysed reaction is adenosine 5'-phosphoramidate + H2O = AMP + NH4(+). Hydrolyzes adenosine 5'-monophosphoramidate substrates such as AMP-morpholidate, AMP-N-alanine methyl ester, AMP-alpha-acetyl lysine methyl ester and AMP-NH2. The sequence is that of Adenosine 5'-monophosphoramidase hnt1 (hnt1) from Schizosaccharomyces pombe (strain 972 / ATCC 24843) (Fission yeast).